Here is a 301-residue protein sequence, read N- to C-terminus: Phosphoglycolate phosphatase 2 (301 aa).

Aspartate 19 (nucleophile) is an active-site residue.

Belongs to the HAD-like hydrolase superfamily. CbbY/CbbZ/Gph/YieH family.

The enzyme catalyses 2-phosphoglycolate + H2O = glycolate + phosphate. In terms of biological role, dephosphorylates 2-phosphoglycolate, but does not contribute to photorespiratory metabolism. This chain is Phosphoglycolate phosphatase 2 (PGLP2), found in Arabidopsis thaliana (Mouse-ear cress).